Consider the following 301-residue polypeptide: Diaminopimelate epimerase (301 aa).

Substrate contacts are provided by asparagine 15, glutamine 47, and asparagine 67. Catalysis depends on cysteine 76, which acts as the Proton donor. Substrate contacts are provided by residues 77–78, asparagine 163, asparagine 197, and 215–216; these read GN and ER. Cysteine 224 (proton acceptor) is an active-site residue. 225-226 is a binding site for substrate; sequence GS. The disordered stretch occupies residues 280-301; sequence SGSLDPSTGLWSRDGTQEAGAR.

Belongs to the diaminopimelate epimerase family. As to quaternary structure, homodimer.

The protein localises to the cytoplasm. The catalysed reaction is (2S,6S)-2,6-diaminopimelate = meso-2,6-diaminopimelate. Its pathway is amino-acid biosynthesis; L-lysine biosynthesis via DAP pathway; DL-2,6-diaminopimelate from LL-2,6-diaminopimelate: step 1/1. Its function is as follows. Catalyzes the stereoinversion of LL-2,6-diaminopimelate (L,L-DAP) to meso-diaminopimelate (meso-DAP), a precursor of L-lysine and an essential component of the bacterial peptidoglycan. This Rhizobium leguminosarum bv. trifolii (strain WSM2304) protein is Diaminopimelate epimerase.